The following is a 324-amino-acid chain: Taste receptor type 2 member 116 (324 aa).

Topologically, residues 1-2 are extracellular; it reads MN. A helical membrane pass occupies residues 3 to 23; the sequence is GVLYITFTVILSVEVIIGNFG. The Cytoplasmic portion of the chain corresponds to 24–55; sequence NGIIALVNIMDLAKRRKISSVDQILTALAISR. A helical transmembrane segment spans residues 56–76; the sequence is IVLLWLVLVSWWLSMFYPGQW. Topologically, residues 77-94 are extracellular; the sequence is MTEGIDVIVHNVWTTLNQ. A helical membrane pass occupies residues 95–115; sequence ISLWLATSFSVFCFLKVANFS. Over 116 to 128 the chain is Cytoplasmic; sequence NTIFFYLKIRVKK. A helical membrane pass occupies residues 129 to 149; sequence VMTGTLIMFLLLLGLNIIVIN. Topologically, residues 150-183 are extracellular; sequence ASKTILIPEYKVNMSNSLNLKNTQISMLFPFANT. N-linked (GlcNAc...) asparagine glycosylation is present at N162. The chain crosses the membrane as a helical span at residues 184-204; sequence LFGFIPFAVSLVTFLLLFFSL. The Cytoplasmic segment spans residues 205 to 236; that stretch reads WKHQRKMHHGAQGCRDSSTKAHIRVLQTLIAS. Residues 237-257 form a helical membrane-spanning segment; the sequence is ILLYFVFFLSLVVKVWISLFL. At 258-261 the chain is on the extracellular side; the sequence is ERML. Residues 262–282 form a helical membrane-spanning segment; sequence LLLITQAAKIAFPSLHPWVLI. Residues 283–324 are Cytoplasmic-facing; it reads LGNAKLRKASLSALQWLRCRHKDEHRRVQRPEVHSCGSSCMP.

This sequence belongs to the G-protein coupled receptor T2R family.

It is found in the membrane. Functionally, putative taste receptor which may play a role in the perception of bitterness. The protein is Taste receptor type 2 member 116 of Rattus norvegicus (Rat).